Reading from the N-terminus, the 343-residue chain is Tetraacyldisaccharide 4'-kinase (343 aa).

53-60 (TCGGAGKT) serves as a coordination point for ATP.

Belongs to the LpxK family.

The catalysed reaction is a lipid A disaccharide + ATP = a lipid IVA + ADP + H(+). It participates in glycolipid biosynthesis; lipid IV(A) biosynthesis; lipid IV(A) from (3R)-3-hydroxytetradecanoyl-[acyl-carrier-protein] and UDP-N-acetyl-alpha-D-glucosamine: step 6/6. Transfers the gamma-phosphate of ATP to the 4'-position of a tetraacyldisaccharide 1-phosphate intermediate (termed DS-1-P) to form tetraacyldisaccharide 1,4'-bis-phosphate (lipid IVA). The sequence is that of Tetraacyldisaccharide 4'-kinase from Bartonella quintana (strain Toulouse) (Rochalimaea quintana).